The primary structure comprises 491 residues: ADP-specific phosphofructokinase (491 aa).

One can recognise an ADPK domain in the interval Glu4–Gln486. Residues Glu281, Glu312, and Asp470 each contribute to the Mg(2+) site. Residue Asp470 is the Proton acceptor of the active site.

This sequence belongs to the carbohydrate kinase PfkC family. Mg(2+) is required as a cofactor.

Its subcellular location is the cytoplasm. It catalyses the reaction beta-D-fructose 6-phosphate + ADP = beta-D-fructose 1,6-bisphosphate + AMP + H(+). It participates in carbohydrate degradation; glycolysis. Catalyzes the phosphorylation of fructose 6-phosphate to fructose 1,6-bisphosphate using ADP as the phosphate donor. In Methanosarcina acetivorans (strain ATCC 35395 / DSM 2834 / JCM 12185 / C2A), this protein is ADP-specific phosphofructokinase.